The primary structure comprises 511 residues: Light-independent protochlorophyllide reductase subunit B (511 aa).

Asp-36 lines the [4Fe-4S] cluster pocket. Catalysis depends on Asp-299, which acts as the Proton donor. 434 to 435 (GM) contacts substrate.

It belongs to the ChlB/BchB/BchZ family. As to quaternary structure, protochlorophyllide reductase is composed of three subunits; ChlL, ChlN and ChlB. Forms a heterotetramer of two ChlB and two ChlN subunits. [4Fe-4S] cluster serves as cofactor.

The protein localises to the plastid. The protein resides in the chloroplast. The enzyme catalyses chlorophyllide a + oxidized 2[4Fe-4S]-[ferredoxin] + 2 ADP + 2 phosphate = protochlorophyllide a + reduced 2[4Fe-4S]-[ferredoxin] + 2 ATP + 2 H2O. It functions in the pathway porphyrin-containing compound metabolism; chlorophyll biosynthesis (light-independent). Its function is as follows. Component of the dark-operative protochlorophyllide reductase (DPOR) that uses Mg-ATP and reduced ferredoxin to reduce ring D of protochlorophyllide (Pchlide) to form chlorophyllide a (Chlide). This reaction is light-independent. The NB-protein (ChlN-ChlB) is the catalytic component of the complex. This is Light-independent protochlorophyllide reductase subunit B from Huperzia lucidula (Shining clubmoss).